The primary structure comprises 194 residues: MSAITITEAAHDYLADLLAKQNTTGIGIRIFITQPGTPYAETCIAYCKPGEEKPDDIALALKSFTAWIDGTSEPFLEDALVDYATDRMGGQLTIKAPNAKVPMVNEDSPMNERINYYLQTEINPGLASHGGQVTLIDVVEEGIAVLQFGGGCQGCGQADVTLKEGIEKTLLARIPELKGVRDVTDHTNRENAYY.

Residues cysteine 152 and cysteine 155 each contribute to the [4Fe-4S] cluster site.

The protein belongs to the NfuA family. Homodimer. The cofactor is [4Fe-4S] cluster.

Involved in iron-sulfur cluster biogenesis. Binds a 4Fe-4S cluster, can transfer this cluster to apoproteins, and thereby intervenes in the maturation of Fe/S proteins. Could also act as a scaffold/chaperone for damaged Fe/S proteins. The sequence is that of Fe/S biogenesis protein NfuA from Stutzerimonas stutzeri (strain A1501) (Pseudomonas stutzeri).